Reading from the N-terminus, the 610-residue chain is MWTFPVDYDVIVIGAGHAGCEAAYCAAKMGASVLLLTSNLDTVAKLSCNPAVGGIGKGHIVREIDALGGIMAEITDLSGIQFRILNQTKGPAVRAPRAQVDKQLYHIHMKRLLEQVPGLHIMQGTAEALLDNGEKVLGVSTKEGWAYLGKTVVLSSGTFMRGLIHIGTQNFSGGRLGDAASLGLSEDLKRLGFPLGRLKTGTPARLLASSIDFSVMEEQPGDHNVCFVHRNEMFVPTLPQVSCHITHTTDQTKDLITKNLHRSALYGGRIEGVGPRYCPSIEDKIVKFADKDRHHIFIEPEGLNTQEVYVNGLSTSMPFDVQYDIIRSVSGLENAIITRPAYAIEYDYVHGNVIFPSLESKLIEGLFLCGQINGTTGYEEAAAQGLIAGVNAVNKVLRHPPFVPSRQESYIGVMLDDLTTQVLDEPYRMFTSRAEHRLLLRQDNAGMRLSHYGHSLGLLSSERYAMFQEQKACIEQEKERLSKTFRKYGDTVVPLTKVLCRPEVSYQQLLTEFPADVRDLGPVVGASLEMEIKYSGYISRQQTLIRSMERSENISIPEDIDYHSISALSLEAREKLSKFTPRTIGSAARISGISVADIQVLMVSLKKDAH.

14–19 (GAGHAG) provides a ligand contact to FAD. 274–288 (GPRYCPSIEDKIVKF) serves as a coordination point for NAD(+).

Belongs to the MnmG family. Homodimer. Heterotetramer of two MnmE and two MnmG subunits. FAD serves as cofactor.

It is found in the cytoplasm. NAD-binding protein involved in the addition of a carboxymethylaminomethyl (cmnm) group at the wobble position (U34) of certain tRNAs, forming tRNA-cmnm(5)s(2)U34. The protein is tRNA uridine 5-carboxymethylaminomethyl modification enzyme MnmG of Chlamydia trachomatis serovar A (strain ATCC VR-571B / DSM 19440 / HAR-13).